A 158-amino-acid chain; its full sequence is Low molecular weight phosphotyrosine protein phosphatase (158 aa).

Ala2 is modified (N-acetylalanine). Residue Cys13 is the Nucleophile of the active site. Arg19 is a catalytic residue. Residue Asp130 is the Proton donor of the active site. Tyr132 and Tyr133 each carry phosphotyrosine.

Belongs to the low molecular weight phosphotyrosine protein phosphatase family. Interacts with EPHA2; dephosphorylates EPHA2. Interacts with EPHB1. As to quaternary structure, interacts with the SH3 domain of SPTAN1. There is no interaction observed for isoforms 2 or 3. In terms of processing, phosphorylated by LCK. Phosphorylation at Tyr-132 increases its phosphatase activity. Post-translationally, not phosphorylated. As to expression, expressed in T-lymphocytes.

It localises to the cytoplasm. The catalysed reaction is O-phospho-L-tyrosyl-[protein] + H2O = L-tyrosyl-[protein] + phosphate. It carries out the reaction a phosphate monoester + H2O = an alcohol + phosphate. Inhibited by sulfhydryl reagents. In terms of biological role, acts on tyrosine phosphorylated proteins, low-MW aryl phosphates and natural and synthetic acyl phosphates with differences in substrate specificity between isoform 1 and isoform 2. Its function is as follows. Does not possess phosphatase activity. This Homo sapiens (Human) protein is Low molecular weight phosphotyrosine protein phosphatase.